Reading from the N-terminus, the 1003-residue chain is DNA topoisomerase 3-alpha (1003 aa).

Residues 35-179 (KVLCVAEKND…NLRVLRARFS (145 aa)) enclose the Toprim domain. The region spanning 197-617 (DQRVSDAVDV…QQVQKYKQVF (421 aa)) is the Topo IA-type catalytic domain. Catalysis depends on tyrosine 362, which acts as the O-(5'-phospho-DNA)-tyrosine intermediate. A disordered region spans residues 400 to 426 (GGPTPRNGSKSDQAHPPIHPTKYTSGL). The segment at 658-685 (CPQCNKDMVLKTKKSGGFYLSCMGFPEC) adopts a C4-type zinc-finger fold. 4 residues coordinate Zn(2+): cysteine 815, cysteine 817, cysteine 840, and cysteine 845. The GRF-type 1 zinc-finger motif lies at 815-854 (CNCGREAVLLTVRKQGPNQGRHFYKCSNGDCNFFLWADSS). The segment at 856-888 (STGGGTPTSASGPPGSSVGCPSSVGSHMDGFGS) is disordered. Over residues 862-888 (PTSASGPPGSSVGCPSSVGSHMDGFGS) the composition is skewed to low complexity. Positions 899, 901, 924, and 932 each coordinate Zn(2+). The GRF-type 2 zinc-finger motif lies at 899 to 941 (CLCGQPAVTRTVQKDGPNKGRQFHTCAKPREQQCGFFQWVDEN). Positions 946–991 (SFAAPAWPGGRGKAQRPEAASKRPRAGSSDAGSTVKKPRKCSLCHQ) are disordered.

The protein belongs to the type IA topoisomerase family. In terms of assembly, binds ssDNA. Interacts (via N-terminal region) with BLM; the interaction is direct. Directly interacts with RMI1. Component of the RMI complex, containing at least TOP3A, RMI1 and RMI2. The RMI complex interacts with BLM. Requires Mg(2+) as cofactor. Highly expressed in testis.

It localises to the mitochondrion matrix. It catalyses the reaction ATP-independent breakage of single-stranded DNA, followed by passage and rejoining.. In terms of biological role, releases the supercoiling and torsional tension of DNA introduced during the DNA replication and transcription by transiently cleaving and rejoining one strand of the DNA duplex. Introduces a single-strand break via transesterification at a target site in duplex DNA. The scissile phosphodiester is attacked by the catalytic tyrosine of the enzyme, resulting in the formation of a DNA-(5'-phosphotyrosyl)-enzyme intermediate and the expulsion of a 3'-OH DNA strand. The free DNA strand then undergoes passage around the unbroken strand thus removing DNA supercoils. Finally, in the religation step, the DNA 3'-OH attacks the covalent intermediate to expel the active-site tyrosine and restore the DNA phosphodiester backbone. As an essential component of the RMI complex it is involved in chromosome separation and the processing of homologous recombination intermediates to limit DNA crossover formation in cells. Has DNA decatenation activity. It is required for mtDNA decatenation and segregation after completion of replication, in a process that does not require BLM, RMI1 and RMI2. The sequence is that of DNA topoisomerase 3-alpha (Top3a) from Mus musculus (Mouse).